Here is a 358-residue protein sequence, read N- to C-terminus: Sesquiterpene synthase Agr3 (358 aa).

Mg(2+) contacts are provided by aspartate 99, asparagine 246, serine 250, and glutamate 254. Positions 99 to 103 (DNISD) match the DDXXD motif motif. (2E,6E)-farnesyl diphosphate contacts are provided by arginine 334 and tyrosine 335.

It belongs to the terpene synthase family. Requires Mg(2+) as cofactor.

It catalyses the reaction (2E,6E)-farnesyl diphosphate = alpha-muurolene + diphosphate. The enzyme catalyses (2E,6E)-farnesyl diphosphate = gamma-muurolene + diphosphate. The catalysed reaction is (2E,6E)-farnesyl diphosphate = delta-cadinene + diphosphate. Its function is as follows. Terpene cyclase that catalyzes the cyclization of farnesyl diphosphate (FPP) to various sesquiterpenes, including alpha-muurolene, gamma-muurolene, germacrene, delta-cadinene, delta-cadinol and cubenol. The protein is Sesquiterpene synthase Agr3 of Cyclocybe aegerita (Black poplar mushroom).